A 289-amino-acid chain; its full sequence is Shikimate dehydrogenase (NADP(+)) (289 aa).

Shikimate contacts are provided by residues 22–24 and threonine 69; that span reads SRS. Residue lysine 73 is the Proton acceptor of the active site. Residue glutamate 85 participates in NADP(+) binding. Shikimate is bound by residues asparagine 94 and aspartate 109. Residues 134–138, 158–163, and isoleucine 226 contribute to the NADP(+) site; these read GAGGA and NRTLSR. Residue tyrosine 228 participates in shikimate binding. An NADP(+)-binding site is contributed by glycine 249.

This sequence belongs to the shikimate dehydrogenase family. In terms of assembly, homodimer.

It carries out the reaction shikimate + NADP(+) = 3-dehydroshikimate + NADPH + H(+). It functions in the pathway metabolic intermediate biosynthesis; chorismate biosynthesis; chorismate from D-erythrose 4-phosphate and phosphoenolpyruvate: step 4/7. Its function is as follows. Involved in the biosynthesis of the chorismate, which leads to the biosynthesis of aromatic amino acids. Catalyzes the reversible NADPH linked reduction of 3-dehydroshikimate (DHSA) to yield shikimate (SA). The protein is Shikimate dehydrogenase (NADP(+)) of Brucella canis (strain ATCC 23365 / NCTC 10854 / RM-666).